The chain runs to 297 residues: Glucuronoxylan 4-O-methyltransferase 3 (297 aa).

Residues 9–29 traverse the membrane as a helical segment; sequence LNLKVIFIGSSILILIIIYLA. A compositionally biased stretch (low complexity) spans 35–47; it reads SSSSKPISKTNLS. Residues 35–63 form a disordered region; the sequence is SSSSKPISKTNLSQEEEETQHKQEGCPTT.

The protein belongs to the methyltransferase superfamily. Expressed in hypocotyls, roots, rosette leaves, stems and siliques.

The protein localises to the golgi apparatus membrane. It catalyses the reaction glucuronoxylan D-glucuronate + n S-adenosyl-L-methionine = glucuronoxylan 4-O-methyl-D-glucuronate + n S-adenosyl-L-homocysteine + n H(+). Functionally, methyltransferase catalyzing 4-O-methylation of glucuronic acid side chains on xylan. The chain is Glucuronoxylan 4-O-methyltransferase 3 (GXM3) from Arabidopsis thaliana (Mouse-ear cress).